Here is a 553-residue protein sequence, read N- to C-terminus: MTDIKMIALGGVREYGKNFYLVEINDSMFILDAGLKYPENEQLGVDLVIPNLDYVIENKGKVQGIFLSHGHADAIGALPYLLAEVSAPVFGSELTIELAKLFVKSNNSTKKFNNFHVVDSDTEIEFKDGLVSFFRTTHSIPESMGIVIGTDKGNIVYTGDFKFDQAAREGYQTDLLRLAEIGKEGVLALLSDSVNATSNDQIASESEVGEEMDSVISDADGRVIVAAVASNLVRIQQVFDSATAHGRRVVLTGTDAENIVRTALRLEKLMITDERLLIKPKDMSKFEDHELIILEAGRMGEPINSLQKMAAGRHRYVQIKEGDLVYIVTTPSTAKEAMVARVENLIYKAGGSVKLITQNLRVSGHANGRDLQLLMNLLKPQYLFPVQGEYRDLAAHAKLAEEVGIFPENIHILKRGDIMVLNDEGFLHEGGVPASDVMIDGNAIGDVGNIVLRDRKVLSEDGIFIVAITVSKKEKRIISKAKVNTRGFVYVKKSHDILRESAELVNTTVGNYLKKDTFDWGELKGNVRDDLSKFLFEQTKRRPAILPVVMEVR.

The Zn(2+) site is built by H69, H71, H138, and D160. 361 to 365 (RVSGH) provides a ligand contact to substrate.

The protein belongs to the metallo-beta-lactamase superfamily. RNA-metabolizing metallo-beta-lactamase-like family. Bacterial RNase J subfamily. In terms of assembly, homodimer, may be a subunit of the RNA degradosome. The cofactor is Zn(2+).

It localises to the cytoplasm. Functionally, an RNase that has 5'-3' exonuclease and possibly endonuclease activity. Involved in maturation of rRNA and in some organisms also mRNA maturation and/or decay. Has an overlapping but not completely redundant role with RNase J1 in the decay of mRNA. The sequence is that of Ribonuclease J 2 from Streptococcus pyogenes serotype M3 (strain ATCC BAA-595 / MGAS315).